Consider the following 122-residue polypeptide: MKPSIAIILCILILGVDSQRWVQFMKEAGQGSRDMWRAYSDMKKANWKNSDKYFHARGNYDAARRGPGGAWAAKVISDAREAVQKFTGHGAEDSRADQFANEWGRSGKDPNHFRPAGLPKRY.

The signal sequence occupies residues 1 to 18 (MKPSIAIILCILILGVDS). Residues 87 to 122 (TGHGAEDSRADQFANEWGRSGKDPNHFRPAGLPKRY) form a disordered region.

Belongs to the SAA family. In terms of tissue distribution, found in various tissues.

It is found in the secreted. Functionally, major acute phase reactant. Apolipoprotein of the HDL complex. In vitro exhibits antimicrobial activity against Escherichia coli, Streptococcus uberis and Pseudomonas aeruginosa. The polypeptide is Serum amyloid A-3 protein (Saa3) (Mus musculus (Mouse)).